Reading from the N-terminus, the 275-residue chain is Exosome complex component RRP40 (275 aa).

At Ala-2 the chain carries N-acetylalanine. Lys-151 is covalently cross-linked (Glycyl lysine isopeptide (Lys-Gly) (interchain with G-Cter in SUMO2)).

This sequence belongs to the RRP40 family. Component of the RNA exosome core complex (Exo-9), composed of EXOSC1, EXOSC2, EXOSC3, EXOSC4, EXOSC5, EXOSC6, EXOSC7, EXOSC8 and EXOSC9; within the complex interacts with EXOSC5 and EXOSC9. The catalytically inactive RNA exosome core complex (Exo-9) associates with the catalytic subunit EXOSC10/RRP6. Exo-9 may associate with DIS3 to form the nucleolar exosome complex, or DIS3L to form the cytoplasmic exosome complex. Exo-9 is formed by a hexameric base ring consisting of the heterodimers EXOSC4-EXOSC9, EXOSC5-EXOSC8 and EXOSC6-EXOSC7, and a cap ring consisting of EXOSC1, EXOSC2 and EXOSC3. The RNA exosome complex associates with cofactors C1D/RRP47, MPHOSPH6/MPP6 and MTREX/MTR4. Interacts with MPHOSPH6/MPP6; the interaction is direct. Interacts with GTPBP1. Interacts with ZC3HAV1. Interacts with DDX17 only in the presence of ZC3HAV1 in an RNA-independent manner. Interacts with DHX36; this interaction occurs in a RNase-insensitive manner. Interacts with HBS1L isoform 2.

Its subcellular location is the cytoplasm. It is found in the nucleus. It localises to the nucleolus. In terms of biological role, non-catalytic component of the RNA exosome complex which has 3'-&gt;5' exoribonuclease activity and participates in a multitude of cellular RNA processing and degradation events. In the nucleus, the RNA exosome complex is involved in proper maturation of stable RNA species such as rRNA, snRNA and snoRNA, in the elimination of RNA processing by-products and non-coding 'pervasive' transcripts, such as antisense RNA species and promoter-upstream transcripts (PROMPTs), and of mRNAs with processing defects, thereby limiting or excluding their export to the cytoplasm. The RNA exosome may be involved in Ig class switch recombination (CSR) and/or Ig variable region somatic hypermutation (SHM) by targeting AICDA deamination activity to transcribed dsDNA substrates. In the cytoplasm, the RNA exosome complex is involved in general mRNA turnover and specifically degrades inherently unstable mRNAs containing AU-rich elements (AREs) within their 3' untranslated regions, and in RNA surveillance pathways, preventing translation of aberrant mRNAs. It seems to be involved in degradation of histone mRNA. The catalytic inactive RNA exosome core complex of 9 subunits (Exo-9) is proposed to play a pivotal role in the binding and presentation of RNA for ribonucleolysis, and to serve as a scaffold for the association with catalytic subunits and accessory proteins or complexes. EXOSC3 as peripheral part of the Exo-9 complex stabilizes the hexameric ring of RNase PH-domain subunits through contacts with EXOSC9 and EXOSC5. The polypeptide is Exosome complex component RRP40 (EXOSC3) (Homo sapiens (Human)).